The primary structure comprises 265 residues: UDP-N-acetylenolpyruvoylglucosamine reductase (265 aa).

The 155-residue stretch at 15-169 folds into the FAD-binding PCMH-type domain; that stretch reads GVGGPAELWT…TRVRLKLKER (155 aa). Arg-149 is an active-site residue. The interval 182 to 203 is disordered; the sequence is DRARKGQPKRKSAGCAFKNPPG. The active-site Proton donor is Cys-196.

This sequence belongs to the MurB family. The cofactor is FAD.

It is found in the cytoplasm. The catalysed reaction is UDP-N-acetyl-alpha-D-muramate + NADP(+) = UDP-N-acetyl-3-O-(1-carboxyvinyl)-alpha-D-glucosamine + NADPH + H(+). Its pathway is cell wall biogenesis; peptidoglycan biosynthesis. Cell wall formation. The polypeptide is UDP-N-acetylenolpyruvoylglucosamine reductase (Thermus thermophilus (strain ATCC BAA-163 / DSM 7039 / HB27)).